The chain runs to 235 residues: Uracil-DNA glycosylase (235 aa).

Asp71 functions as the Proton acceptor in the catalytic mechanism.

Belongs to the uracil-DNA glycosylase (UDG) superfamily. UNG family.

The protein resides in the cytoplasm. The catalysed reaction is Hydrolyzes single-stranded DNA or mismatched double-stranded DNA and polynucleotides, releasing free uracil.. Excises uracil residues from the DNA which can arise as a result of misincorporation of dUMP residues by DNA polymerase or due to deamination of cytosine. This Helicobacter hepaticus (strain ATCC 51449 / 3B1) protein is Uracil-DNA glycosylase.